Here is a 460-residue protein sequence, read N- to C-terminus: Argininosuccinate lyase (460 aa).

It belongs to the lyase 1 family. Argininosuccinate lyase subfamily.

It localises to the cytoplasm. The enzyme catalyses 2-(N(omega)-L-arginino)succinate = fumarate + L-arginine. It participates in amino-acid biosynthesis; L-arginine biosynthesis; L-arginine from L-ornithine and carbamoyl phosphate: step 3/3. The protein is Argininosuccinate lyase of Staphylococcus haemolyticus (strain JCSC1435).